The primary structure comprises 623 residues: tRNA uridine 5-carboxymethylaminomethyl modification enzyme MnmG (623 aa).

G10 to G15 lines the FAD pocket. G269–F283 lines the NAD(+) pocket.

It belongs to the MnmG family. Homodimer. Heterotetramer of two MnmE and two MnmG subunits. The cofactor is FAD.

It is found in the cytoplasm. Functionally, NAD-binding protein involved in the addition of a carboxymethylaminomethyl (cmnm) group at the wobble position (U34) of certain tRNAs, forming tRNA-cmnm(5)s(2)U34. The protein is tRNA uridine 5-carboxymethylaminomethyl modification enzyme MnmG of Rhizobium meliloti (strain 1021) (Ensifer meliloti).